Consider the following 109-residue polypeptide: Cytochrome c oxidase subunit 6A1, mitochondrial (109 aa).

The transit peptide at 1–24 directs the protein to the mitochondrion; sequence MAAAAGSRVFGLLGRSRLQLSRCM. Residues 25 to 34 lie on the Mitochondrial matrix side of the membrane; it reads SSGAHGEEGS. Residues 35-59 form a helical membrane-spanning segment; sequence ARMWKALTYFVALPGVGVSMLNVFL. Over 60 to 109 the chain is Mitochondrial intermembrane; the sequence is KSHHGEEERPEFVAYPHLRIRSKPFPWGDGNHTLFHNPHVNPLPTGYEDE.

Belongs to the cytochrome c oxidase subunit 6A family. In terms of assembly, component of the cytochrome c oxidase (complex IV, CIV), a multisubunit enzyme composed of 14 subunits. The complex is composed of a catalytic core of 3 subunits MT-CO1, MT-CO2 and MT-CO3, encoded in the mitochondrial DNA, and 11 supernumerary subunits COX4I1 (or COX4I2), COX5A, COX5B, COX6A2 (or COX6A1), COX6B1 (or COX6B2), COX6C, COX7A1 (or COX7A2), COX7B, COX7C, COX8B and NDUFA4, which are encoded in the nuclear genome. The complex exists as a monomer or a dimer and forms supercomplexes (SCs) in the inner mitochondrial membrane with NADH-ubiquinone oxidoreductase (complex I, CI) and ubiquinol-cytochrome c oxidoreductase (cytochrome b-c1 complex, complex III, CIII), resulting in different assemblies (supercomplex SCI(1)III(2)IV(1) and megacomplex MCI(2)III(2)IV(2)).

The protein resides in the mitochondrion inner membrane. The protein operates within energy metabolism; oxidative phosphorylation. Functionally, component of the cytochrome c oxidase, the last enzyme in the mitochondrial electron transport chain which drives oxidative phosphorylation. The respiratory chain contains 3 multisubunit complexes succinate dehydrogenase (complex II, CII), ubiquinol-cytochrome c oxidoreductase (cytochrome b-c1 complex, complex III, CIII) and cytochrome c oxidase (complex IV, CIV), that cooperate to transfer electrons derived from NADH and succinate to molecular oxygen, creating an electrochemical gradient over the inner membrane that drives transmembrane transport and the ATP synthase. Cytochrome c oxidase is the component of the respiratory chain that catalyzes the reduction of oxygen to water. Electrons originating from reduced cytochrome c in the intermembrane space (IMS) are transferred via the dinuclear copper A center (CU(A)) of subunit 2 and heme A of subunit 1 to the active site in subunit 1, a binuclear center (BNC) formed by heme A3 and copper B (CU(B)). The BNC reduces molecular oxygen to 2 water molecules unsing 4 electrons from cytochrome c in the IMS and 4 protons from the mitochondrial matrix. The polypeptide is Cytochrome c oxidase subunit 6A1, mitochondrial (COX6A1) (Bos taurus (Bovine)).